Consider the following 64-residue polypeptide: MNRDIYTQIETVGVLEKRVEKAGTFELKAAAMALAKAQRKLSVLLAKGMAELEDRLKIAELRTK.

Its function is as follows. Transcription factor that regulates expression of phage structural components with protein P14. The chain is Transcription factor P13 from Pseudoalteromonas phage PM2 (Bacteriophage PM2).